We begin with the raw amino-acid sequence, 487 residues long: Probable glutamate receptor (487 aa).

The first 23 residues, 1–23 (MDKGQHFVFFVLTTVLLLRESSH), serve as a signal peptide directing secretion. Topologically, residues 24 to 169 (AGAMRNDAAA…FFHFLAPFSK (146 aa)) are extracellular. The N-linked (GlcNAc...) asparagine glycan is linked to asparagine 104. The chain crosses the membrane as a helical span at residues 170–190 (ETWTGLLFAYILTCFCLFLVA). The Cytoplasmic portion of the chain corresponds to 191–235 (RLSPCEWNEPKNEENHFTFLNSLWFGAGALALQGVTPRPKALSVR). A helical membrane pass occupies residues 236–256 (VIAAIWWLFTIALLAAYIANF). Residues 257–419 (TALLSSGSEQ…ERWSPLQPQA (163 aa)) are Extracellular-facing. A helical transmembrane segment spans residues 420-440 (LGGLFLTLAIGLALGVIAAVV). Residues 441-487 (ELSNKSRHAAGHVKKSCCSIFTEEMCTRLRIKENTRQSQETSGRANA) are Cytoplasmic-facing.

Belongs to the glutamate-gated ion channel (TC 1.A.10.1) family.

The protein resides in the cell membrane. The protein localises to the postsynaptic cell membrane. Its function is as follows. Receptor for glutamate. L-glutamate acts as an excitatory neurotransmitter at many synapses in the central nervous system. The postsynaptic actions of Glu are mediated by a variety of receptors that are named according to their selective agonists. This is Probable glutamate receptor (KBP) from Anas platyrhynchos (Mallard).